The primary structure comprises 750 residues: EF-hand domain-containing family member C2 (750 aa).

DM10 domains lie at 75–182 (DKQV…KKIG), 226–368 (DGKV…RTKY), and 430–537 (ISNI…ENNT). Positions 557-592 (SKSREITQVFAAADYNHTKVVPYNTFRDILMSITMG) constitute an EF-hand domain.

Microtubule inner protein component of sperm flagellar doublet microtubules.

The protein localises to the cytoplasm. It localises to the cytoskeleton. It is found in the cilium axoneme. Its subcellular location is the flagellum axoneme. Its function is as follows. Microtubule inner protein (MIP) part of the dynein-decorated doublet microtubules (DMTs) in cilia axoneme, which is required for motile cilia beating. In Mus musculus (Mouse), this protein is EF-hand domain-containing family member C2 (Efhc2).